Reading from the N-terminus, the 394-residue chain is Acetate kinase (394 aa).

Asn-7 provides a ligand contact to Mg(2+). Position 14 (Lys-14) interacts with ATP. Position 90 (Arg-90) interacts with substrate. Catalysis depends on Asp-147, which acts as the Proton donor/acceptor. ATP contacts are provided by residues 204–208 (HLGNG), 278–280 (DLR), and 326–330 (GIGEN). Residue Glu-380 coordinates Mg(2+).

This sequence belongs to the acetokinase family. As to quaternary structure, homodimer. Mg(2+) serves as cofactor. Requires Mn(2+) as cofactor.

The protein localises to the cytoplasm. It carries out the reaction acetate + ATP = acetyl phosphate + ADP. It participates in metabolic intermediate biosynthesis; acetyl-CoA biosynthesis; acetyl-CoA from acetate: step 1/2. Its function is as follows. Catalyzes the formation of acetyl phosphate from acetate and ATP. Can also catalyze the reverse reaction. The protein is Acetate kinase of Flavobacterium johnsoniae (strain ATCC 17061 / DSM 2064 / JCM 8514 / BCRC 14874 / CCUG 350202 / NBRC 14942 / NCIMB 11054 / UW101) (Cytophaga johnsonae).